Consider the following 255-residue polypeptide: Hydroxyacylglutathione hydrolase (255 aa).

Residues His-56, His-58, Asp-60, His-61, His-114, Asp-133, and His-171 each contribute to the Zn(2+) site.

This sequence belongs to the metallo-beta-lactamase superfamily. Glyoxalase II family. Monomer. Zn(2+) is required as a cofactor.

The enzyme catalyses an S-(2-hydroxyacyl)glutathione + H2O = a 2-hydroxy carboxylate + glutathione + H(+). The protein operates within secondary metabolite metabolism; methylglyoxal degradation; (R)-lactate from methylglyoxal: step 2/2. In terms of biological role, thiolesterase that catalyzes the hydrolysis of S-D-lactoyl-glutathione to form glutathione and D-lactic acid. The chain is Hydroxyacylglutathione hydrolase from Cereibacter sphaeroides (strain ATCC 17025 / ATH 2.4.3) (Rhodobacter sphaeroides).